A 65-amino-acid chain; its full sequence is Conotoxin TsMRCL-04 (65 aa).

Positions 1–20 are cleaved as a signal peptide; that stretch reads MRCLPVFIILLLLIPSAASA. Residues 21–48 constitute a propeptide that is removed on maturation; it reads AQPETKDDAALASFYDNAKRTLQRHWAK. Glu-63 carries the post-translational modification Glutamic acid 1-amide.

The protein belongs to the conotoxin T superfamily. In terms of processing, contains 2 disulfide bonds that can be either 'C1-C3, C2-C4' or 'C1-C4, C2-C3', since these disulfide connectivities have been observed for conotoxins with cysteine framework V (for examples, see AC P0DQQ7 and AC P81755). Expressed by the venom duct.

It is found in the secreted. The polypeptide is Conotoxin TsMRCL-04 (Conus tessulatus (Tessellate cone)).